The chain runs to 284 residues: Bifunctional protein FolD (284 aa).

NADP(+) is bound by residues 165-167 (GRS), Ser-190, and Val-231.

It belongs to the tetrahydrofolate dehydrogenase/cyclohydrolase family. Homodimer.

It carries out the reaction (6R)-5,10-methylene-5,6,7,8-tetrahydrofolate + NADP(+) = (6R)-5,10-methenyltetrahydrofolate + NADPH. The enzyme catalyses (6R)-5,10-methenyltetrahydrofolate + H2O = (6R)-10-formyltetrahydrofolate + H(+). It functions in the pathway one-carbon metabolism; tetrahydrofolate interconversion. In terms of biological role, catalyzes the oxidation of 5,10-methylenetetrahydrofolate to 5,10-methenyltetrahydrofolate and then the hydrolysis of 5,10-methenyltetrahydrofolate to 10-formyltetrahydrofolate. The polypeptide is Bifunctional protein FolD (Geobacillus thermodenitrificans (strain NG80-2)).